Reading from the N-terminus, the 35-residue chain is Small toxic polypeptide LdrA (35 aa).

Residues 8 to 28 (MIFWHDLAAPILAGIITAAIV) form a helical membrane-spanning segment.

The protein belongs to the Ldr toxic peptide family.

The protein localises to the cell inner membrane. Functionally, toxic component of a type I toxin-antitoxin (TA) system. Inhibits ATP synthesis possibly due to its insertion in the cell inner membrane, ATP levels drop over 50% 2 minutes after induction. Overexpression is toxic leading to cell death, it inhibits cell growth within 30 minutes; C-terminally tagged versions of the protein are toxic while N-terminally tagged versions are not. In Escherichia coli (strain K12), this protein is Small toxic polypeptide LdrA (ldrA).